The primary structure comprises 338 residues: Phosphate acyltransferase (338 aa).

The protein belongs to the PlsX family. As to quaternary structure, homodimer. Probably interacts with PlsY.

It localises to the cytoplasm. It catalyses the reaction a fatty acyl-[ACP] + phosphate = an acyl phosphate + holo-[ACP]. It participates in lipid metabolism; phospholipid metabolism. Catalyzes the reversible formation of acyl-phosphate (acyl-PO(4)) from acyl-[acyl-carrier-protein] (acyl-ACP). This enzyme utilizes acyl-ACP as fatty acyl donor, but not acyl-CoA. This Endomicrobium trichonymphae protein is Phosphate acyltransferase.